Reading from the N-terminus, the 662-residue chain is Glycogen debranching enzyme (662 aa).

Aspartate 338 functions as the Nucleophile in the catalytic mechanism. Glutamate 373 acts as the Proton donor in catalysis.

It belongs to the glycosyl hydrolase 13 family.

It catalyses the reaction Hydrolysis of (1-&gt;6)-alpha-D-glucosidic linkages to branches with degrees of polymerization of three or four glucose residues in limit dextrin.. The protein operates within glycan degradation; glycogen degradation. Removes maltotriose and maltotetraose chains that are attached by 1,6-alpha-linkage to the limit dextrin main chain, generating a debranched limit dextrin. The polypeptide is Glycogen debranching enzyme (Yersinia enterocolitica serotype O:8 / biotype 1B (strain NCTC 13174 / 8081)).